The following is a 216-amino-acid chain: LexA repressor (216 aa).

Positions 28–48 form a DNA-binding region, H-T-H motif; it reads RAEIAAELGFSSANSAEEHLR. Residues S134 and K171 each act as for autocatalytic cleavage activity in the active site.

Belongs to the peptidase S24 family. Homodimer.

The catalysed reaction is Hydrolysis of Ala-|-Gly bond in repressor LexA.. Its function is as follows. Represses a number of genes involved in the response to DNA damage (SOS response), including recA and lexA. In the presence of single-stranded DNA, RecA interacts with LexA causing an autocatalytic cleavage which disrupts the DNA-binding part of LexA, leading to derepression of the SOS regulon and eventually DNA repair. This is LexA repressor from Paraburkholderia xenovorans (strain LB400).